Here is a 496-residue protein sequence, read N- to C-terminus: Galactose/methyl galactoside import ATP-binding protein MglA (496 aa).

ABC transporter domains are found at residues leucine 5–threonine 240 and lysine 243–leucine 496. Residue glycine 37–serine 44 participates in ATP binding.

This sequence belongs to the ABC transporter superfamily. Galactose/methyl galactoside importer (TC 3.A.1.2.3) family. In terms of assembly, the complex is composed of one ATP-binding protein (MglA), two transmembrane proteins (MglC) and a solute-binding protein (MglB).

Its subcellular location is the cell inner membrane. It catalyses the reaction D-galactose(out) + ATP + H2O = D-galactose(in) + ADP + phosphate + H(+). The enzyme catalyses methyl beta-D-galactoside(out) + ATP + H2O = methyl beta-D-galactoside(in) + ADP + phosphate + H(+). Part of the ABC transporter complex MglABC involved in galactose/methyl galactoside import. Responsible for energy coupling to the transport system. In Treponema pallidum (strain Nichols), this protein is Galactose/methyl galactoside import ATP-binding protein MglA.